Reading from the N-terminus, the 862-residue chain is Chaperone protein ClpB 1 (862 aa).

Positions 5 to 147 (AEQFTEQAWA…KEAITAVRGN (143 aa)) constitute a Clp R domain. Repeat regions lie at residues 8-72 (FTEQ…LQRL) and 84-147 (LGRS…VRGN). An NBD1 region spans residues 160–341 (ESLAKYGRDL…RRFQQVLVDQ (182 aa)). Position 207 to 214 (207 to 214 (GEPGVGKT)) interacts with ATP. The linker stretch occupies residues 342-550 (PTVPDTISIL…IAEVIAKWTG (209 aa)). Residues 392–526 (IDLVDESAAR…QEDLLEDEDG (135 aa)) are a coiled coil. Positions 560 to 771 (EMEKLLQLED…RLDDQIIFRS (212 aa)) are NBD2. 610-617 (GPTGVGKT) is an ATP binding site. Residues 772-862 (LEKEELRRIV…DAGDDKLSIS (91 aa)) are C-terminal.

The protein belongs to the ClpA/ClpB family. In terms of assembly, homohexamer. The oligomerization is ATP-dependent.

The protein localises to the cytoplasm. Part of a stress-induced multi-chaperone system, it is involved in the recovery of the cell from heat-induced damage, in cooperation with DnaK, DnaJ and GrpE. Acts before DnaK, in the processing of protein aggregates. Protein binding stimulates the ATPase activity; ATP hydrolysis unfolds the denatured protein aggregates, which probably helps expose new hydrophobic binding sites on the surface of ClpB-bound aggregates, contributing to the solubilization and refolding of denatured protein aggregates by DnaK. The sequence is that of Chaperone protein ClpB 1 (clpB1) from Parasynechococcus marenigrum (strain WH8102).